Reading from the N-terminus, the 1235-residue chain is Chitin synthase 4 (1235 aa).

The segment covering 1 to 11 has biased composition (pro residues); it reads MSLPRRPGPSP. The segment at 1-203 is disordered; that stretch reads MSLPRRPGPS…ASKGKREKSG (203 aa). Residues 1 to 212 lie on the Cytoplasmic side of the membrane; sequence MSLPRRPGPS…GGLPTPSFWN (212 aa). Residues 19-28 show a composition bias toward basic residues; sequence YRQSGSRRSR. Over residues 46–59 the composition is skewed to polar residues; the sequence is PSQQQRVPSISSFP. Residues 94–107 are compositionally biased toward basic and acidic residues; sequence IRPERNRIGKDHPN. The span at 116–125 shows a compositional bias: polar residues; the sequence is NMNTLPSSTG. Residues 169–187 show a composition bias toward basic and acidic residues; sequence ETEKSGDERRRRRKSDTTK. Residues 188-199 are compositionally biased toward basic residues; that stretch reads HGKIVKASKGKR. The helical transmembrane segment at 213 to 233 threads the bilayer; sequence IYCGFVTFWCPGFVLKCFGMP. The Extracellular portion of the chain corresponds to 234 to 244; the sequence is EMAQQRAWREK. Residues 245-265 traverse the membrane as a helical segment; that stretch reads MGLISIILLIMGFVGFITFGF. The Cytoplasmic segment spans residues 266-514; sequence TQVVCGKPPL…ASKVVLYVSL (249 aa). Residues 515-535 form a helical membrane-spanning segment; that stretch reads VLILAVVLARFVLALIFQWFI. At 536–1065 the chain is on the extracellular side; the sequence is SKTYAAAKTS…SMQFIVGIEL (530 aa). The segment at 545-592 is disordered; it reads SQTSDQRKRNRQIEDWTEDIYRAPPRLPGEVGSSVAGSSDRQSKRSSA. Residues 549–558 show a composition bias toward basic and acidic residues; sequence DQRKRNRQIE. N-linked (GlcNAc...) asparagine glycosylation occurs at Asn-639. Residues 645–670 form a disordered region; that stretch reads FLKSDAYGSSSSPADGPGPAGFIHEA. The span at 648–665 shows a compositional bias: low complexity; it reads SDAYGSSSSPADGPGPAG. Asn-1034 carries an N-linked (GlcNAc...) asparagine glycan. Residues 1066–1086 form a helical membrane-spanning segment; it reads IGTLVLPAAIAFTFYVVIISI. At 1087 to 1092 the chain is on the cytoplasmic side; it reads INSPPQ. The chain crosses the membrane as a helical span at residues 1093 to 1113; sequence IIPLVLLGLILGLPAILVVVT. Topologically, residues 1114 to 1116 are extracellular; sequence AHS. A helical membrane pass occupies residues 1117 to 1137; it reads WSYIIWMFIYLLSLPVWNFVL. At 1138–1235 the chain is on the cytoplasmic side; that stretch reads PTYAFWKFDD…RHFDDYFSDA (98 aa). The tract at residues 1201-1235 is disordered; sequence RDNVISGVGGSNGWGSSQPRGHEQGRHFDDYFSDA. Over residues 1220–1235 the composition is skewed to basic and acidic residues; it reads RGHEQGRHFDDYFSDA.

The protein belongs to the chitin synthase family. Class IV subfamily.

Its subcellular location is the cell membrane. It carries out the reaction [(1-&gt;4)-N-acetyl-beta-D-glucosaminyl](n) + UDP-N-acetyl-alpha-D-glucosamine = [(1-&gt;4)-N-acetyl-beta-D-glucosaminyl](n+1) + UDP + H(+). Its function is as follows. Polymerizes chitin, a structural polymer of the cell wall and septum, by transferring the sugar moiety of UDP-GlcNAc to the non-reducing end of the growing chitin polymer. The sequence is that of Chitin synthase 4 (chs-4) from Neurospora crassa (strain ATCC 24698 / 74-OR23-1A / CBS 708.71 / DSM 1257 / FGSC 987).